The sequence spans 223 residues: Ubiquitin carboxyl-terminal hydrolase isozyme L1 (223 aa).

N-acetylmethionine is present on Met1. The region spanning 2–221 (QLKPMEINPE…VRFSAVALCK (220 aa)) is the UCH catalytic domain. The interval 5-10 (PMEINP) is interaction with ubiquitin. Cys90 serves as the catalytic Nucleophile. Ser125 is modified (phosphoserine). His161 serves as the catalytic Proton donor. The interaction with ubiquitin stretch occupies residues 211 to 216 (EVRFSA). Cys220 carries S-farnesyl cysteine lipidation. Positions 221 to 223 (KAA) are cleaved as a propeptide — removed in mature form.

Belongs to the peptidase C12 family. Monomer. Homodimer. Interacts with COPS5 and SNCA. Post-translationally, O-glycosylated.

It is found in the cytoplasm. The protein localises to the endoplasmic reticulum membrane. The catalysed reaction is Thiol-dependent hydrolysis of ester, thioester, amide, peptide and isopeptide bonds formed by the C-terminal Gly of ubiquitin (a 76-residue protein attached to proteins as an intracellular targeting signal).. Its function is as follows. Ubiquitin-protein hydrolase involved both in the processing of ubiquitin precursors and of ubiquitinated proteins. This enzyme is a thiol protease that recognizes and hydrolyzes a peptide bond at the C-terminal glycine of ubiquitin. Also binds to free monoubiquitin and may prevent its degradation in lysosomes. The homodimer may have ATP-independent ubiquitin ligase activity. This Equus caballus (Horse) protein is Ubiquitin carboxyl-terminal hydrolase isozyme L1 (UCHL1).